Reading from the N-terminus, the 327-residue chain is Glutamyl endopeptidase (327 aa).

An N-terminal signal peptide occupies residues 1–29 (MKGKFLKVSSLFVATLTTATLVSSPAANA). Residues 30–68 (LSSKAMDNHPQQSQSSKQQTPKIQKGGNLKPLEQREHAN) constitute a propeptide that is removed on maturation. The segment at 33–61 (KAMDNHPQQSQSSKQQTPKIQKGGNLKPL) is disordered. The span at 40-54 (QQSQSSKQQTPKIQK) shows a compositional bias: low complexity. Catalysis depends on charge relay system residues His119, Asp161, and Ser237. Positions 283 to 327 (FANDDQPNNPDNPDNPNNPDNPNNPNNPDNPDNGDNNNSDNPDAA) are disordered. Positions 286–327 (DDQPNNPDNPDNPNNPDNPNNPNNPDNPDNGDNNNSDNPDAA) are enriched in low complexity. 9 tandem repeats follow at residues 289-291 (PNN), 292-294 (PDN), 295-297 (PDN), 298-300 (PNN), 301-303 (PDN), 304-306 (PNN), 307-309 (PNN), 310-312 (PDN), and 313-315 (PDN). Residues 289 to 315 (PNNPDNPDNPNNPDNPNNPNNPDNPDN) are 9 X 3 AA repeats of P-[DN]-N.

This sequence belongs to the peptidase S1B family. Proteolytically cleaved by aureolysin (aur). This cleavage leads to the activation of SspA.

The protein localises to the secreted. It carries out the reaction Preferential cleavage: Glu-|-Xaa, Asp-|-Xaa.. Functionally, preferentially cleaves peptide bonds on the carboxyl-terminal side of aspartate and glutamate. Along with other extracellular proteases it is involved in colonization and infection of human tissues. Required for proteolytic maturation of thiol protease SspB and inactivation of SspC, an inhibitor of SspB. It is the most important protease for degradation of fibronectin-binding protein (FnBP) and surface protein A, which are involved in adherence to host cells. May also protect bacteria against host defense mechanism by cleaving the immunoglobulin classes IgG, IgA and IgM. May be involved in the stability of secreted lipases. This Staphylococcus aureus (strain MW2) protein is Glutamyl endopeptidase (sspA).